A 272-amino-acid chain; its full sequence is Probable proteasome subunit alpha type-6 (272 aa).

The segment covering 243-261 has biased composition (low complexity); it reads AARASRAAAEEPQAPTAEA. Residues 243–272 are disordered; that stretch reads AARASRAAAEEPQAPTAEAILDSADAMETD.

Belongs to the peptidase T1A family. As to quaternary structure, the 26S proteasome consists of a 20S proteasome core and two 19S regulatory subunits. The 20S proteasome core is composed of 28 subunits that are arranged in four stacked rings, resulting in a barrel-shaped structure. The two end rings are each formed by seven alpha subunits, and the two central rings are each formed by seven beta subunits. The catalytic chamber with the active sites is on the inside of the barrel.

The protein localises to the cytoplasm. Its subcellular location is the nucleus. Functionally, the proteasome is a multicatalytic proteinase complex which is characterized by its ability to cleave peptides with Arg, Phe, Tyr, Leu, and Glu adjacent to the leaving group at neutral or slightly basic pH. The proteasome has an ATP-dependent proteolytic activity. This Schizosaccharomyces pombe (strain 972 / ATCC 24843) (Fission yeast) protein is Probable proteasome subunit alpha type-6.